Consider the following 733-residue polypeptide: Phosphoribosylformylglycinamidine synthase subunit PurL (733 aa).

Residue His41 is part of the active site. Positions 44 and 83 each coordinate ATP. Glu85 provides a ligand contact to Mg(2+). Residues 86 to 89 and Arg108 contribute to the substrate site; that span reads SHNH. Residue His87 is the Proton acceptor of the active site. A Mg(2+)-binding site is contributed by Asp109. The interval 212 to 232 is disordered; sequence GASFASQELSEESEEKRPSVQ. Gln232 is a substrate binding site. Asp260 contacts Mg(2+). Position 304–306 (304–306) interacts with substrate; it reads ESQ. Positions 488 and 525 each coordinate ATP. Asn526 contributes to the Mg(2+) binding site. Ser528 is a binding site for substrate.

The protein belongs to the FGAMS family. Monomer. Part of the FGAM synthase complex composed of 1 PurL, 1 PurQ and 2 PurS subunits.

It localises to the cytoplasm. It catalyses the reaction N(2)-formyl-N(1)-(5-phospho-beta-D-ribosyl)glycinamide + L-glutamine + ATP + H2O = 2-formamido-N(1)-(5-O-phospho-beta-D-ribosyl)acetamidine + L-glutamate + ADP + phosphate + H(+). The protein operates within purine metabolism; IMP biosynthesis via de novo pathway; 5-amino-1-(5-phospho-D-ribosyl)imidazole from N(2)-formyl-N(1)-(5-phospho-D-ribosyl)glycinamide: step 1/2. Part of the phosphoribosylformylglycinamidine synthase complex involved in the purines biosynthetic pathway. Catalyzes the ATP-dependent conversion of formylglycinamide ribonucleotide (FGAR) and glutamine to yield formylglycinamidine ribonucleotide (FGAM) and glutamate. The FGAM synthase complex is composed of three subunits. PurQ produces an ammonia molecule by converting glutamine to glutamate. PurL transfers the ammonia molecule to FGAR to form FGAM in an ATP-dependent manner. PurS interacts with PurQ and PurL and is thought to assist in the transfer of the ammonia molecule from PurQ to PurL. The protein is Phosphoribosylformylglycinamidine synthase subunit PurL of Caldanaerobacter subterraneus subsp. tengcongensis (strain DSM 15242 / JCM 11007 / NBRC 100824 / MB4) (Thermoanaerobacter tengcongensis).